The following is a 707-amino-acid chain: Eomesodermin homolog (707 aa).

The segment covering glycine 27–serine 42 has biased composition (gly residues). The tract at residues glycine 27–proline 125 is disordered. Positions alanine 73–alanine 93 are enriched in low complexity. Serine 117 is subject to Phosphoserine. Positions leucine 278 to aspartate 458 form a DNA-binding region, T-box. Threonine 473 is modified (phosphothreonine). Positions alanine 592–proline 707 are required for transcription activation. The disordered stretch occupies residues threonine 642–tyrosine 689. The segment covering serine 648–tyrosine 657 has biased composition (polar residues). The span at serine 667–proline 678 shows a compositional bias: low complexity. Residues lysine 680–tyrosine 689 are compositionally biased toward basic and acidic residues.

In terms of tissue distribution, expressed in CD8+ T-cells.

It localises to the nucleus. In terms of biological role, functions as a transcriptional activator playing a crucial role during development. Functions in trophoblast differentiation and later in gastrulation, regulating both mesoderm delamination and endoderm specification. Plays a role in brain development being required for the specification and the proliferation of the intermediate progenitor cells and their progeny in the cerebral cortex. Required for differentiation and migration of unipolar dendritic brush cells. Also involved in the differentiation of CD8+ T-cells during immune response regulating the expression of lytic effector genes. The sequence is that of Eomesodermin homolog (Eomes) from Mus musculus (Mouse).